A 464-amino-acid chain; its full sequence is Argininosuccinate lyase (464 aa).

N-acetylalanine is present on A2. K7 is modified (N6-acetyllysine). 2-(N(omega)-L-arginino)succinate is bound at residue S27. At K69 the chain carries N6-acetyllysine. 2-(N(omega)-L-arginino)succinate contacts are provided by N114 and T159. H160 acts as the Proton acceptor in catalysis. The active-site Proton donor is the S281. K288 carries the post-translational modification N6-acetyllysine. 4 residues coordinate 2-(N(omega)-L-arginino)succinate: N289, Y321, Q326, and K329.

The protein belongs to the lyase 1 family. Argininosuccinate lyase subfamily. Homotetramer. Forms tissue-specific complexes with ASS1, SLC7A1, HSP90AA1 and nitric oxide synthase NOS1, NOS2 or NOS3; the complex maintenance is independent of ASL catalytic function. Post-translationally, acetylation modifies enzyme activity in response to alterations of extracellular nutrient availability. Acetylation increased with trichostin A (TSA) or with nicotinamide (NAM). Glucose increases acetylation by about a factor of 3 with decreasing enzyme activity. Acetylation on Lys-288 is decreased on the addition of extra amino acids resulting in activation of enzyme activity. In terms of tissue distribution, expressed in lung and brain (at protein level).

It carries out the reaction 2-(N(omega)-L-arginino)succinate = fumarate + L-arginine. Its pathway is amino-acid biosynthesis; L-arginine biosynthesis; L-arginine from L-ornithine and carbamoyl phosphate: step 3/3. The protein operates within nitrogen metabolism; urea cycle; L-arginine and fumarate from (N(omega)-L-arginino)succinate: step 1/1. With respect to regulation, enzyme activity is regulated by acetylation. Its function is as follows. Catalyzes the reversible cleavage of L-argininosuccinate to fumarate and L-arginine, an intermediate step reaction in the urea cycle mostly providing for hepatic nitrogen detoxification into excretable urea as well as de novo L-arginine synthesis in nonhepatic tissues. Essential regulator of intracellular and extracellular L-arginine pools. As part of citrulline-nitric oxide cycle, forms tissue-specific multiprotein complexes with argininosuccinate synthase ASS1, transport protein SLC7A1 and nitric oxide synthase NOS1, NOS2 or NOS3, allowing for cell-autonomous L-arginine synthesis while channeling extracellular L-arginine to nitric oxide synthesis pathway. This Mus musculus (Mouse) protein is Argininosuccinate lyase (Asl).